Here is a 279-residue protein sequence, read N- to C-terminus: Protein phosphatase 1 regulatory subunit 3E (279 aa).

S16 and S33 each carry phosphoserine. The interval 28-89 (RSQRPSLEEE…RSPDTRKRVR (62 aa)) is disordered. Residues 51 to 65 (ARSRAHVPGRGRRAR) show a composition bias toward basic residues. Residue S66 is modified to Phosphoserine. A PP1-binding motif motif is present at residues 87 to 90 (RVRF). Residues 154 to 259 (AARLQAQRIC…NNGGRDYALL (106 aa)) enclose the CBM21 domain. Positions 176-198 (GSARVLDLAYEKRVSVRWSADGW) are glycogen-binding motif. The substrate-binding motif stretch occupies residues 248 to 256 (WDNNGGRDY).

In terms of tissue distribution, expressed in liver and heart, with low levels in skeletal muscle.

Acts as a glycogen-targeting subunit for PP1. PP1 is involved in glycogen metabolism and contributes to the activation of glycogen synthase leading to an increase in glycogen synthesis. This Rattus norvegicus (Rat) protein is Protein phosphatase 1 regulatory subunit 3E (Ppp1r3e).